A 284-amino-acid polypeptide reads, in one-letter code: Bifunctional protein FolD (284 aa).

NADP(+)-binding positions include 166 to 168 (GAS) and I232.

The protein belongs to the tetrahydrofolate dehydrogenase/cyclohydrolase family. Homodimer.

The catalysed reaction is (6R)-5,10-methylene-5,6,7,8-tetrahydrofolate + NADP(+) = (6R)-5,10-methenyltetrahydrofolate + NADPH. It carries out the reaction (6R)-5,10-methenyltetrahydrofolate + H2O = (6R)-10-formyltetrahydrofolate + H(+). Its pathway is one-carbon metabolism; tetrahydrofolate interconversion. Functionally, catalyzes the oxidation of 5,10-methylenetetrahydrofolate to 5,10-methenyltetrahydrofolate and then the hydrolysis of 5,10-methenyltetrahydrofolate to 10-formyltetrahydrofolate. The protein is Bifunctional protein FolD of Pseudomonas paraeruginosa (strain DSM 24068 / PA7) (Pseudomonas aeruginosa (strain PA7)).